A 147-amino-acid chain; its full sequence is Acidic phospholipase A2 S7-48J (147 aa).

Positions 1–19 (MYPAHLLVLLAVCVSLLGA) are cleaved as a signal peptide. Residues 20-27 (SDIPPQPL) constitute a propeptide that is removed on maturation. Cystine bridges form between Cys-38-Cys-99, Cys-54-Cys-146, Cys-56-Cys-72, Cys-71-Cys-127, Cys-78-Cys-120, Cys-88-Cys-113, and Cys-106-Cys-118. Ca(2+) contacts are provided by Tyr-55, Gly-57, and Gly-59. His-75 is an active-site residue. Asp-76 lines the Ca(2+) pocket. Residue Asp-121 is part of the active site.

This sequence belongs to the phospholipase A2 family. Group I subfamily. D49 sub-subfamily. It depends on Ca(2+) as a cofactor. Expressed by the venom gland.

It is found in the secreted. It carries out the reaction a 1,2-diacyl-sn-glycero-3-phosphocholine + H2O = a 1-acyl-sn-glycero-3-phosphocholine + a fatty acid + H(+). Functionally, snake venom phospholipase A2 (PLA2) that inhibits collagen-induced platelet aggregation. PLA2 catalyzes the calcium-dependent hydrolysis of the 2-acyl groups in 3-sn-phosphoglycerides. The chain is Acidic phospholipase A2 S7-48J from Austrelaps superbus (Lowland copperhead snake).